A 187-amino-acid polypeptide reads, in one-letter code: Cytokinin riboside 5'-monophosphate phosphoribohydrolase (187 aa).

Residue Lys74 forms an Isoglutamyl lysine isopeptide (Lys-Gln) (interchain with Q-Cter in protein Pup) linkage. Residues Glu80, 98–99 (RK), 115–121 (GVGTLDE), and Thr127 contribute to the substrate site.

The protein belongs to the LOG family. Homodimer. Post-translationally, pupylated at Lys-74 by the prokaryotic ubiquitin-like protein Pup, which leads to its degradation by the proteasome. The proteasomal control of cytokinin synthesis is essential to protect M.tuberculosis against host-produced NO.

It catalyses the reaction N(6)-(dimethylallyl)adenosine 5'-phosphate + H2O = N(6)-dimethylallyladenine + D-ribose 5-phosphate. It carries out the reaction 9-ribosyl-trans-zeatin 5'-phosphate + H2O = trans-zeatin + D-ribose 5-phosphate. Its function is as follows. Catalyzes the hydrolytic removal of ribose 5'-monophosphate from nitrogen N6-modified adenosines, the final step of bioactive cytokinin synthesis. Is involved in the synthesis of isopentenyladenine (iP) and 2-methylthio-iP (2MeS-iP), the most abundant cytokinins detected in M.tuberculosis lysates and supernatants. Is also able to convert trans-zeatin-riboside monophosphate (tZRMP) to trans-zeatin (tZ) in vitro; however, it may not be involved in the biosynthesis of this minor cytokinin in vivo. Accumulation of Rv1205 sensitizes M.tuberculosis to nitric oxide since cytokinin breakdown products synergize with NO to kill M.tuberculosis. Shows a slow AMP hydrolase activity, but is not able to hydrolyze ATP. Displays no lysine decarboxylase (LDC) activity (L-lysine conversion to cadaverine). In Mycobacterium tuberculosis (strain ATCC 25618 / H37Rv), this protein is Cytokinin riboside 5'-monophosphate phosphoribohydrolase.